The following is a 108-amino-acid chain: UPF0060 membrane protein Spro_2289 (108 aa).

Transmembrane regions (helical) follow at residues Leu6–Leu26, Ser31–Leu51, Ala61–Val81, and Ala85–Trp105.

It belongs to the UPF0060 family.

The protein resides in the cell inner membrane. This chain is UPF0060 membrane protein Spro_2289, found in Serratia proteamaculans (strain 568).